The primary structure comprises 719 residues: Protein lin-15A (719 aa).

4 disordered regions span residues 179–199 (FSHF…EGSQ), 419–464 (YRDH…SISW), 559–626 (LTTA…PTKT), and 684–719 (AKQV…EPIF). Residues 570-579 (STSTDSSSSS) are compositionally biased toward low complexity. Polar residues predominate over residues 604–617 (LLQNKPTHVESSSP). Over residues 693–719 (EPKHIPPTHMEKKPEELLMDPKPEPIF) the composition is skewed to basic and acidic residues.

It is found in the nucleus. Its function is as follows. Synthetic multivulva (synMuv) class A protein. SynMuv proteins are required to repress the induction of vulval development. Acts redundantly with SynMuv class B protein lin-15B, and lin-35 to negatively regulate vulval development, most likely through antagonization of the Ras-signaling pathway. May also negatively regulate vulval development in association with other SynMuv class B proteins such as dpl-1 and efl-1. Regulates let-23 basal activity. Required for the correct expression and/or stability of lin-56. The sequence is that of Protein lin-15A from Caenorhabditis elegans.